The following is a 430-amino-acid chain: Serine--tRNA ligase (430 aa).

An L-serine-binding site is contributed by T237 to E239. Position 268–270 (R268–E270) interacts with ATP. E291 contributes to the L-serine binding site. E355–S358 serves as a coordination point for ATP. An L-serine-binding site is contributed by S391.

Belongs to the class-II aminoacyl-tRNA synthetase family. Type-1 seryl-tRNA synthetase subfamily. Homodimer. The tRNA molecule binds across the dimer.

Its subcellular location is the cytoplasm. The enzyme catalyses tRNA(Ser) + L-serine + ATP = L-seryl-tRNA(Ser) + AMP + diphosphate + H(+). It catalyses the reaction tRNA(Sec) + L-serine + ATP = L-seryl-tRNA(Sec) + AMP + diphosphate + H(+). It functions in the pathway aminoacyl-tRNA biosynthesis; selenocysteinyl-tRNA(Sec) biosynthesis; L-seryl-tRNA(Sec) from L-serine and tRNA(Sec): step 1/1. Functionally, catalyzes the attachment of serine to tRNA(Ser). Is also able to aminoacylate tRNA(Sec) with serine, to form the misacylated tRNA L-seryl-tRNA(Sec), which will be further converted into selenocysteinyl-tRNA(Sec). This Serratia proteamaculans (strain 568) protein is Serine--tRNA ligase.